The chain runs to 496 residues: Trimethylamine methyltransferase MttB (496 aa).

A non-standard amino acid (pyrrolysine) is located at residue Pyl331.

This sequence belongs to the trimethylamine methyltransferase family.

The catalysed reaction is Co(I)-[trimethylamine-specific corrinoid protein] + trimethylamine + H(+) = methyl-Co(III)-[trimethylamine-specific corrinoid protein] + dimethylamine. Catalyzes the transfer of a methyl group from trimethylamine to the corrinoid cofactor of MttC. This is Trimethylamine methyltransferase MttB from Desulfitobacterium hafniense (strain DSM 10664 / DCB-2).